The chain runs to 439 residues: Serine--tRNA ligase (439 aa).

247 to 249 (TSE) serves as a coordination point for L-serine. An ATP-binding site is contributed by 278–280 (RSE). Glu-301 contributes to the L-serine binding site. Residue 365-368 (EISS) participates in ATP binding. Residue Ser-400 participates in L-serine binding.

It belongs to the class-II aminoacyl-tRNA synthetase family. Type-1 seryl-tRNA synthetase subfamily. Homodimer. The tRNA molecule binds across the dimer.

The protein resides in the cytoplasm. It catalyses the reaction tRNA(Ser) + L-serine + ATP = L-seryl-tRNA(Ser) + AMP + diphosphate + H(+). The enzyme catalyses tRNA(Sec) + L-serine + ATP = L-seryl-tRNA(Sec) + AMP + diphosphate + H(+). It participates in aminoacyl-tRNA biosynthesis; selenocysteinyl-tRNA(Sec) biosynthesis; L-seryl-tRNA(Sec) from L-serine and tRNA(Sec): step 1/1. Its function is as follows. Catalyzes the attachment of serine to tRNA(Ser). Is also able to aminoacylate tRNA(Sec) with serine, to form the misacylated tRNA L-seryl-tRNA(Sec), which will be further converted into selenocysteinyl-tRNA(Sec). The protein is Serine--tRNA ligase of Paracidovorax citrulli (strain AAC00-1) (Acidovorax citrulli).